We begin with the raw amino-acid sequence, 200 residues long: GTP cyclohydrolase-2 (200 aa).

49-53 contributes to the GTP binding site; sequence RVHSE. Zn(2+) is bound by residues C54, C65, and C67. GTP contacts are provided by residues Q70, 92–94, and T114; that span reads EGR. The active-site Proton acceptor is D126. The active-site Nucleophile is R128. Residues T149 and K154 each contribute to the GTP site.

It belongs to the GTP cyclohydrolase II family. Homodimer. Requires Zn(2+) as cofactor.

It catalyses the reaction GTP + 4 H2O = 2,5-diamino-6-hydroxy-4-(5-phosphoribosylamino)-pyrimidine + formate + 2 phosphate + 3 H(+). The protein operates within cofactor biosynthesis; riboflavin biosynthesis; 5-amino-6-(D-ribitylamino)uracil from GTP: step 1/4. In terms of biological role, catalyzes the conversion of GTP to 2,5-diamino-6-ribosylamino-4(3H)-pyrimidinone 5'-phosphate (DARP), formate and pyrophosphate. This is GTP cyclohydrolase-2 from Klebsiella pneumoniae subsp. pneumoniae (strain ATCC 700721 / MGH 78578).